A 477-amino-acid chain; its full sequence is Alkaline phosphatase (477 aa).

A Mg(2+)-binding site is contributed by aspartate 44. Aspartate 44 provides a ligand contact to Zn(2+). The active-site Phosphoserine intermediate is the serine 94. N-linked (GlcNAc...) asparagine glycosylation is present at asparagine 124. Residues histidine 155 and threonine 157 each coordinate Mg(2+). Cysteine 165 and cysteine 185 are joined by a disulfide. A glycan (N-linked (GlcNAc...) asparagine) is linked at asparagine 214. Residue glutamate 315 coordinates Mg(2+). Zn(2+)-binding residues include aspartate 320, histidine 324, aspartate 361, and histidine 362. The N-linked (GlcNAc...) asparagine glycan is linked to asparagine 413. Histidine 437 contacts Zn(2+).

In terms of assembly, homodimer. It depends on Mg(2+) as a cofactor. Requires Zn(2+) as cofactor.

The protein localises to the cell membrane. It catalyses the reaction a phosphate monoester + H2O = an alcohol + phosphate. This chain is Alkaline phosphatase, found in Gadus morhua (Atlantic cod).